A 426-amino-acid polypeptide reads, in one-letter code: Glutamate-1-semialdehyde 2,1-aminomutase (426 aa).

The residue at position 265 (K265) is an N6-(pyridoxal phosphate)lysine.

Belongs to the class-III pyridoxal-phosphate-dependent aminotransferase family. HemL subfamily. In terms of assembly, homodimer. Pyridoxal 5'-phosphate serves as cofactor.

The protein localises to the cytoplasm. The enzyme catalyses (S)-4-amino-5-oxopentanoate = 5-aminolevulinate. The protein operates within porphyrin-containing compound metabolism; protoporphyrin-IX biosynthesis; 5-aminolevulinate from L-glutamyl-tRNA(Glu): step 2/2. In Shigella boydii serotype 4 (strain Sb227), this protein is Glutamate-1-semialdehyde 2,1-aminomutase.